A 438-amino-acid polypeptide reads, in one-letter code: Lipoyl synthase, mitochondrial (438 aa).

The transit peptide at 1–31 (MAASARGLRTLQSAHSSTTVPRLQLAVSRCY) directs the protein to the mitochondrion. A compositionally biased stretch (low complexity) spans 34–57 (TTSPDPPITNSSNSSNSSNSTPTP). A disordered region spans residues 34 to 58 (TTSPDPPITNSSNSSNSSNSTPTPK). The [4Fe-4S] cluster site is built by cysteine 148, cysteine 153, cysteine 159, cysteine 179, cysteine 183, cysteine 186, and serine 394. Residues 162 to 383 (GSSKSAATAT…KERALEMGFL (222 aa)) enclose the Radical SAM core domain.

Belongs to the radical SAM superfamily. Lipoyl synthase family. Requires [4Fe-4S] cluster as cofactor.

It localises to the mitochondrion. It carries out the reaction [[Fe-S] cluster scaffold protein carrying a second [4Fe-4S](2+) cluster] + N(6)-octanoyl-L-lysyl-[protein] + 2 oxidized [2Fe-2S]-[ferredoxin] + 2 S-adenosyl-L-methionine + 4 H(+) = [[Fe-S] cluster scaffold protein] + N(6)-[(R)-dihydrolipoyl]-L-lysyl-[protein] + 4 Fe(3+) + 2 hydrogen sulfide + 2 5'-deoxyadenosine + 2 L-methionine + 2 reduced [2Fe-2S]-[ferredoxin]. It participates in protein modification; protein lipoylation via endogenous pathway; protein N(6)-(lipoyl)lysine from octanoyl-[acyl-carrier-protein]: step 2/2. Catalyzes the radical-mediated insertion of two sulfur atoms into the C-6 and C-8 positions of the octanoyl moiety bound to the lipoyl domains of lipoate-dependent enzymes, thereby converting the octanoylated domains into lipoylated derivatives. The sequence is that of Lipoyl synthase, mitochondrial from Paracoccidioides brasiliensis (strain Pb18).